Here is a 415-residue protein sequence, read N- to C-terminus: MNTNKLSLRRNVIYLAVVQGSNYLLPLLTFPYLVRTLGPENFGIFGFCQATMLYMIMFVEYGFNLTATQSIAKAADSKDKVTSIFWAVIFSKIVLIVITLIFLTSMTLLVPEYNKHAVIIWSFVPALVGNLIYPIWLFQGKEKMKWLTLSSILSRLAIIPLTFIFVNTKSDIAIAGFIQSSANLVAGIIALAIVVHEGWIGKVTLSLHNVRRSLADGFHVFISTSAISLYSTGIVIILGFISGPTSVGNFNAANTIRNALQGLLNPITQAIYPRISSTLVLNRVKGVILIKKSLTCLSLIGGAFSLILLLGASILVKISIGPGYDNAVIVLMIISPLPFLISLSNVYGIQVMLTHNYKKEFSKILIAAGLLSLLLIFPLTTLFKEIGAAITLLATECLVTSLMLMFVRNNKLLVC.

Residues 1–11 (MNTNKLSLRRN) lie on the Cytoplasmic side of the membrane. A helical transmembrane segment spans residues 12 to 32 (VIYLAVVQGSNYLLPLLTFPY). Residues 33-41 (LVRTLGPEN) are Periplasmic-facing. The chain crosses the membrane as a helical span at residues 42–62 (FGIFGFCQATMLYMIMFVEYG). The Cytoplasmic segment spans residues 63–83 (FNLTATQSIAKAADSKDKVTS). A helical transmembrane segment spans residues 84–104 (IFWAVIFSKIVLIVITLIFLT). Residues 105-117 (SMTLLVPEYNKHA) lie on the Periplasmic side of the membrane. Residues 118-138 (VIIWSFVPALVGNLIYPIWLF) form a helical membrane-spanning segment. Over 139–173 (QGKEKMKWLTLSSILSRLAIIPLTFIFVNTKSDIA) the chain is Cytoplasmic. The chain crosses the membrane as a helical span at residues 174–194 (IAGFIQSSANLVAGIIALAIV). The Periplasmic segment spans residues 195 to 220 (VHEGWIGKVTLSLHNVRRSLADGFHV). Residues 221–241 (FISTSAISLYSTGIVIILGFI) traverse the membrane as a helical segment. Topologically, residues 242–295 (SGPTSVGNFNAANTIRNALQGLLNPITQAIYPRISSTLVLNRVKGVILIKKSLT) are cytoplasmic. A helical membrane pass occupies residues 296–316 (CLSLIGGAFSLILLLGASILV). The Periplasmic portion of the chain corresponds to 317 to 328 (KISIGPGYDNAV). The chain crosses the membrane as a helical span at residues 329 to 349 (IVLMIISPLPFLISLSNVYGI). The Cytoplasmic portion of the chain corresponds to 350–362 (QVMLTHNYKKEFS). Residues 363–383 (KILIAAGLLSLLLIFPLTTLF) traverse the membrane as a helical segment. The Periplasmic segment spans residues 384-385 (KE). A helical transmembrane segment spans residues 386-406 (IGAAITLLATECLVTSLMLMF). The Cytoplasmic segment spans residues 407–415 (VRNNKLLVC).

This sequence belongs to the polysaccharide synthase family.

It is found in the cell inner membrane. It participates in bacterial outer membrane biogenesis; LPS O-antigen biosynthesis. In terms of biological role, may be involved in the translocation process of the nascent O-polysaccharide molecules and/or its ligation to lipid A core units. The protein is Putative O-antigen transporter (rfbX) of Escherichia coli (strain K12).